The chain runs to 125 residues: Large ribosomal subunit protein eL31 (125 aa).

This sequence belongs to the eukaryotic ribosomal protein eL31 family. Component of the large ribosomal subunit.

Its subcellular location is the cytoplasm. Functionally, component of the large ribosomal subunit. The ribosome is a large ribonucleoprotein complex responsible for the synthesis of proteins in the cell. This is Large ribosomal subunit protein eL31 (rpl31) from Xenopus laevis (African clawed frog).